A 118-amino-acid polypeptide reads, in one-letter code: Probable non-functional immunoglobulin lambda variable 2-33 (118 aa).

An N-terminal signal peptide occupies residues Met1–Ala19. Positions Gln20 to Thr44 are framework-1. The 85-residue stretch at Gly34–Phe118 folds into the Ig-like domain. A disulfide bridge connects residues Cys41 and Cys109. The complementarity-determining-1 stretch occupies residues Ser45–His53. The interval Val54–Tyr70 is framework-2. The complementarity-determining-2 stretch occupies residues Asn71 to Asn73. A framework-3 region spans residues Thr74 to Cys109. The complementarity-determining-3 stretch occupies residues Ser110–Phe118.

In terms of assembly, immunoglobulins are composed of two identical heavy chains and two identical light chains; disulfide-linked.

It is found in the secreted. Its subcellular location is the cell membrane. Probable non-functional open reading frame (ORF) of V region of the variable domain of immunoglobulin light chains. Non-functional ORF generally cannot participate in the synthesis of a productive immunoglobulin chain due to altered V-(D)-J or switch recombination and/or splicing site (at mRNA level) and/or conserved amino acid change (protein level). Immunoglobulins, also known as antibodies, are membrane-bound or secreted glycoproteins produced by B lymphocytes. In the recognition phase of humoral immunity, the membrane-bound immunoglobulins serve as receptors which, upon binding of a specific antigen, trigger the clonal expansion and differentiation of B lymphocytes into immunoglobulins-secreting plasma cells. Secreted immunoglobulins mediate the effector phase of humoral immunity, which results in the elimination of bound antigens. The antigen binding site is formed by the variable domain of one heavy chain, together with that of its associated light chain. Thus, each immunoglobulin has two antigen binding sites with remarkable affinity for a particular antigen. The variable domains are assembled by a process called V-(D)-J rearrangement and can then be subjected to somatic hypermutations which, after exposure to antigen and selection, allow affinity maturation for a particular antigen. This Homo sapiens (Human) protein is Probable non-functional immunoglobulin lambda variable 2-33.